The sequence spans 117 residues: uncharacterized protein (117 aa).

Residues 4–26 form a helical membrane-spanning segment; the sequence is VLNFHFSYIYTYFITITTNYKYG.

The protein resides in the host membrane. This is an uncharacterized protein from Sulfolobus islandicus rod-shaped virus 1 (SIRV-1).